A 612-amino-acid chain; its full sequence is UvrABC system protein C (612 aa).

Positions 20–98 constitute a GIY-YIG domain; sequence THSGVYRMLD…IKQHRPKYNI (79 aa). The UVR domain occupies 208–243; the sequence is SSVLEEISANMYQASEDMEYEKAQVYRDQLVVLRKL.

It belongs to the UvrC family. Interacts with UvrB in an incision complex.

It is found in the cytoplasm. The UvrABC repair system catalyzes the recognition and processing of DNA lesions. UvrC both incises the 5' and 3' sides of the lesion. The N-terminal half is responsible for the 3' incision and the C-terminal half is responsible for the 5' incision. This chain is UvrABC system protein C, found in Francisella tularensis subsp. holarctica (strain LVS).